Reading from the N-terminus, the 238-residue chain is MGRKWANIVAKKTAKDGATSKVYAKFGVEIYAAAKQGEPDPESNSSLKFVIERAKQAQVPKHVIDKAIDKAKGGGDETFVQGRYEGFGPNGSMVIAETLTSNVNRTIANVRTTFHKNGGNIGAAGAVSYMFDNTGVIVFEGTDPDHIFEILLDAEVDVRDVTEEEGNIVVYTEPTDLHKGIAALKAAGITEFSTTELEMIAQSEVELSPEDLEIFEGLIDALEDDDDVQKVYHNVANL.

This sequence belongs to the TACO1 family. YeeN subfamily.

It is found in the cytoplasm. The sequence is that of Probable transcriptional regulatory protein LACR_0237 from Lactococcus lactis subsp. cremoris (strain SK11).